The sequence spans 1058 residues: Carbamoyl phosphate synthase large chain (1058 aa).

Residues 1–401 are carboxyphosphate synthetic domain; it reads MPKRKDIQKI…SLLKACRSLE (401 aa). ATP-binding residues include Arg-129, Arg-169, Gly-175, Gly-176, Arg-208, Ile-210, Glu-215, Gly-241, Ile-242, His-243, Gln-284, and Glu-298. An ATP-grasp 1 domain is found at 133–327; it reads KQLMQELDQP…IAKLAAKIAV (195 aa). The Mg(2+) site is built by Gln-284, Glu-298, and Asn-300. Mn(2+) contacts are provided by Gln-284, Glu-298, and Asn-300. An oligomerization domain region spans residues 402 to 546; sequence IGVCHNEMTS…YSTYELENES (145 aa). The tract at residues 547 to 929 is carbamoyl phosphate synthetic domain; that stretch reads VQSNKESILV…ALYKAFEANN (383 aa). The region spanning 671–861 is the ATP-grasp 2 domain; that stretch reads EKALKELGIP…MAQIATKLIL (191 aa). ATP is bound by residues Arg-707, Ser-746, Ile-748, Glu-752, Gly-777, Val-778, His-779, Ser-780, Gln-820, and Glu-832. Residues Gln-820, Glu-832, and Asn-834 each coordinate Mg(2+). Mn(2+) is bound by residues Gln-820, Glu-832, and Asn-834. Residues 930 to 1058 enclose the MGS-like domain; sequence SHLSEFGQIV…ESRCFNIEAI (129 aa). Positions 930–1058 are allosteric domain; that stretch reads SHLSEFGQIV…ESRCFNIEAI (129 aa).

Belongs to the CarB family. In terms of assembly, composed of two chains; the small (or glutamine) chain promotes the hydrolysis of glutamine to ammonia, which is used by the large (or ammonia) chain to synthesize carbamoyl phosphate. Tetramer of heterodimers (alpha,beta)4. Mg(2+) is required as a cofactor. The cofactor is Mn(2+).

The enzyme catalyses hydrogencarbonate + L-glutamine + 2 ATP + H2O = carbamoyl phosphate + L-glutamate + 2 ADP + phosphate + 2 H(+). It catalyses the reaction hydrogencarbonate + NH4(+) + 2 ATP = carbamoyl phosphate + 2 ADP + phosphate + 2 H(+). It functions in the pathway amino-acid biosynthesis; L-arginine biosynthesis; carbamoyl phosphate from bicarbonate: step 1/1. It participates in pyrimidine metabolism; UMP biosynthesis via de novo pathway; (S)-dihydroorotate from bicarbonate: step 1/3. Its function is as follows. Large subunit of the glutamine-dependent carbamoyl phosphate synthetase (CPSase). CPSase catalyzes the formation of carbamoyl phosphate from the ammonia moiety of glutamine, carbonate, and phosphate donated by ATP, constituting the first step of 2 biosynthetic pathways, one leading to arginine and/or urea and the other to pyrimidine nucleotides. The large subunit (synthetase) binds the substrates ammonia (free or transferred from glutamine from the small subunit), hydrogencarbonate and ATP and carries out an ATP-coupled ligase reaction, activating hydrogencarbonate by forming carboxy phosphate which reacts with ammonia to form carbamoyl phosphate. This is Carbamoyl phosphate synthase large chain from Streptococcus pyogenes serotype M3 (strain ATCC BAA-595 / MGAS315).